Here is a 574-residue protein sequence, read N- to C-terminus: MRTSQYILATLKETPSDAEIVSHQLMLRAGMIRRVASGLYTWLPTGLRVLRKVENIVREEMNKANAIEMLMPVIQPADLWEESGRWDEFGPELMRFTDRHNRTFALGPTHEEVITDFVRKEISSYKQLPISLYQIQTKVRDERRPRFGVMRAREFTMKDAYSFHLSDECLDATYQVMHKAYCNIFERLNLDYRPVIADTGSIGGSVSHEFHVLAESGEDAIAFSDGSDYAANIEKAEALAPSEPRPAATKELKAFPTPDAKTINELKKHYGVKPHRGVKTLIVYAAPDENGVRGLVALVLRGDHDLNELKAEKHPLVDSPLEMATEADIVAAIGAKPGSLGPVGLSMPIIVDRSANILADFVAGANKDDEHYSGINWDRDVTDYEVADIRNIVEGDASPCGQGTLQIKRGIEVGHIFQLGTKYSQAMKAGVLNESGKNQIMTMGCYGIGVSRIVAAAIEQNNDQYGIIWPQPIAPFDLAIVPMNMHKSHRIPDIATNLYQGLKDAGLDVLFDDRKERPGVMFNDMELIGVPFTLVIGERNLDENKVELKNRRTGEKLMIDIDTAIDAIKAAVKG.

Belongs to the class-II aminoacyl-tRNA synthetase family. ProS type 1 subfamily. As to quaternary structure, homodimer.

Its subcellular location is the cytoplasm. The enzyme catalyses tRNA(Pro) + L-proline + ATP = L-prolyl-tRNA(Pro) + AMP + diphosphate. Catalyzes the attachment of proline to tRNA(Pro) in a two-step reaction: proline is first activated by ATP to form Pro-AMP and then transferred to the acceptor end of tRNA(Pro). As ProRS can inadvertently accommodate and process non-cognate amino acids such as alanine and cysteine, to avoid such errors it has two additional distinct editing activities against alanine. One activity is designated as 'pretransfer' editing and involves the tRNA(Pro)-independent hydrolysis of activated Ala-AMP. The other activity is designated 'posttransfer' editing and involves deacylation of mischarged Ala-tRNA(Pro). The misacylated Cys-tRNA(Pro) is not edited by ProRS. The chain is Proline--tRNA ligase from Pseudoalteromonas translucida (strain TAC 125).